A 282-amino-acid polypeptide reads, in one-letter code: Aldo-keto reductase ML1669 (282 aa).

Tyr57 (proton donor) is an active-site residue. Residues Leu197, Val235, Arg237, Ser238, Ala239, Ser246, Asn247, and Arg273 each coordinate NADPH.

It belongs to the aldo/keto reductase family.

The protein is Aldo-keto reductase ML1669 of Mycobacterium leprae (strain TN).